A 420-amino-acid polypeptide reads, in one-letter code: uncharacterized protein (420 aa).

2 disordered regions span residues 84 to 103 (RSQA…GTSE) and 122 to 211 (SMNN…NKKS). A compositionally biased stretch (polar residues) spans 85 to 103 (SQANSESTPPEHTWSGTSE). Over residues 184 to 199 (SMTDQEVEQRRKEANK) the composition is skewed to basic and acidic residues. 2 coiled-coil regions span residues 265-310 (TEKE…TATN) and 345-374 (LQFK…NFKE). The segment covering 399 to 408 (KTSSPKTSIA) has biased composition (polar residues). Positions 399–420 (KTSSPKTSIAGSHRRSTRSSEN) are disordered. Residues 410-420 (SHRRSTRSSEN) show a composition bias toward basic residues.

This is an uncharacterized protein from Caenorhabditis elegans.